Here is a 207-residue protein sequence, read N- to C-terminus: Mediator of RNA polymerase II transcription subunit 21 (207 aa).

The disordered stretch occupies residues 37–121 (PHPDVPDAAP…PDSPRTFASR (85 aa)). Positions 65–80 (PVPAQSQASPPAQNPA) are enriched in low complexity. The span at 84–96 (AGAGTSVGEGGQT) shows a compositional bias: gly residues. Positions 97 to 108 (PGPAAGAGADPN) are enriched in low complexity. The stretch at 146–196 (IDSSEAEQEKRIRELEGELRRVEEERELKMRELKRLRRTLENVLRAVETGL) forms a coiled coil.

It belongs to the Mediator complex subunit 21 family. In terms of assembly, component of the Mediator complex.

It is found in the nucleus. Component of the Mediator complex, a coactivator involved in the regulated transcription of nearly all RNA polymerase II-dependent genes. Mediator functions as a bridge to convey information from gene-specific regulatory proteins to the basal RNA polymerase II transcription machinery. Mediator is recruited to promoters by direct interactions with regulatory proteins and serves as a scaffold for the assembly of a functional preinitiation complex with RNA polymerase II and the general transcription factors. The protein is Mediator of RNA polymerase II transcription subunit 21 (srb7) of Neosartorya fischeri (strain ATCC 1020 / DSM 3700 / CBS 544.65 / FGSC A1164 / JCM 1740 / NRRL 181 / WB 181) (Aspergillus fischerianus).